Consider the following 543-residue polypeptide: Lipoyl synthase, apicoplast (543 aa).

The first 63 residues, methionine 1–serine 63, serve as a signal peptide directing secretion. Residues cysteine 252, cysteine 257, cysteine 263, cysteine 278, cysteine 282, cysteine 285, and serine 493 each contribute to the [4Fe-4S] cluster site. The Radical SAM core domain maps to tryptophan 264 to lysine 482.

The protein belongs to the radical SAM superfamily. Lipoyl synthase family. [4Fe-4S] cluster serves as cofactor.

It localises to the plastid. The protein localises to the apicoplast. It carries out the reaction [[Fe-S] cluster scaffold protein carrying a second [4Fe-4S](2+) cluster] + N(6)-octanoyl-L-lysyl-[protein] + 2 oxidized [2Fe-2S]-[ferredoxin] + 2 S-adenosyl-L-methionine + 4 H(+) = [[Fe-S] cluster scaffold protein] + N(6)-[(R)-dihydrolipoyl]-L-lysyl-[protein] + 4 Fe(3+) + 2 hydrogen sulfide + 2 5'-deoxyadenosine + 2 L-methionine + 2 reduced [2Fe-2S]-[ferredoxin]. It functions in the pathway protein modification; protein lipoylation via endogenous pathway; protein N(6)-(lipoyl)lysine from octanoyl-[acyl-carrier-protein]: step 2/2. Catalyzes the radical-mediated insertion of two sulfur atoms into the C-6 and C-8 positions of the octanoyl moiety bound to the lipoyl domains of lipoate-dependent enzymes, thereby converting the octanoylated domains into lipoylated derivatives. The chain is Lipoyl synthase, apicoplast from Toxoplasma gondii.